We begin with the raw amino-acid sequence, 81 residues long: MIDDHEALLLLVLSSGPAALASLPLHPVLGKGYRNTPGALEEKAVRISCVRECLNVVQIGGRIPVLLTSAAELPRLGSCVR.

Positions 1 to 20 (MIDDHEALLLLVLSSGPAAL) are cleaved as a signal peptide.

This is an uncharacterized protein from Treponema pallidum (strain Nichols).